A 279-amino-acid polypeptide reads, in one-letter code: Large ribosomal subunit protein uL2 (279 aa).

Positions 224–279 (AMNAVDHPMGGGRGHSKGGNIPRSPWNQPSRGLKTRPKKSWDWMIVSDRRKNKAGK) are disordered.

It belongs to the universal ribosomal protein uL2 family. In terms of assembly, part of the 50S ribosomal subunit. Forms a bridge to the 30S subunit in the 70S ribosome.

One of the primary rRNA binding proteins. Required for association of the 30S and 50S subunits to form the 70S ribosome, for tRNA binding and peptide bond formation. It has been suggested to have peptidyltransferase activity; this is somewhat controversial. Makes several contacts with the 16S rRNA in the 70S ribosome. The sequence is that of Large ribosomal subunit protein uL2 from Elusimicrobium minutum (strain Pei191).